We begin with the raw amino-acid sequence, 333 residues long: MKFLQQMRKLFGLAAKFPARLTIAVIGTALLAGLVGVVGDTAIAVAFSKPGLPVEYLQVPSPSMGHDIKIQFQGGGQHAVYLLDGLRAQEDYNGWDINTPAFEEYYHSGLSVIMPVGGQSSFYSNWYQPSQGNGQHYTYKWETFLTQEMPSWLQANKNVLPTGNAAVGLSMSGSSALILASYYPQQFPYAASLSGFLNPSEGWWPTMIGLAMNDSGGYNANSMWGPSTDPAWKRNDPMVQIPRLVANNTRIWVYCGNGAPNELGGDNIPAKFLESLTLSTNEIFQNTYAASGGRNGVFNFPPNGTHSWPYWNQQLVAMKPDIQQILNGSNNNA.

Residues 1–44 (MKFLQQMRKLFGLAAKFPARLTIAVIGTALLAGLVGVVGDTAIA) form the signal peptide. Substrate is bound at residue 86-87 (LR). Residues 102 to 112 (FEEYYHSGLSV) are fibronectin-binding. 2 residues coordinate substrate: S170 and N198. S170 serves as the catalytic Nucleophile. The active site involves E274. Substrate is bound by residues 276-279 (LTLS) and 306-308 (HSW). Residue H306 is part of the active site.

Belongs to the mycobacterial A85 antigen family. Homodimer.

It localises to the secreted. It catalyses the reaction an acyl-CoA + a 1,2-diacyl-sn-glycerol = a triacyl-sn-glycerol + CoA. The catalysed reaction is 2 alpha,alpha'-trehalose 6-mycolate = alpha,alpha'-trehalose 6,6'-bismycolate + alpha,alpha-trehalose. The antigen 85 proteins (FbpA, FbpB, FbpC) are responsible for the high affinity of mycobacteria to fibronectin, a large adhesive glycoprotein, which facilitates the attachment of M.tuberculosis to murine alveolar macrophages (AMs). They also help to maintain the integrity of the cell wall by catalyzing the transfer of mycolic acids to cell wall arabinogalactan and through the synthesis of alpha,alpha-trehalose dimycolate (TDM, cord factor). They catalyze the transfer of a mycoloyl residue from one molecule of alpha,alpha-trehalose monomycolate (TMM) to another TMM, leading to the formation of TDM. This is Diacylglycerol acyltransferase/mycolyltransferase Ag85C (fbpC) from Mycobacterium leprae (strain TN).